A 413-amino-acid polypeptide reads, in one-letter code: Histidine--tRNA ligase (413 aa).

Belongs to the class-II aminoacyl-tRNA synthetase family. Homodimer.

It localises to the cytoplasm. It carries out the reaction tRNA(His) + L-histidine + ATP = L-histidyl-tRNA(His) + AMP + diphosphate + H(+). The polypeptide is Histidine--tRNA ligase (Geobacter metallireducens (strain ATCC 53774 / DSM 7210 / GS-15)).